A 130-amino-acid polypeptide reads, in one-letter code: Chemotaxis protein CheY-3 (130 aa).

A Response regulatory domain is found at 10–127 (KILIVDDFST…TLKEKLDKIF (118 aa)). Residues D15, D16, D60, and N62 each coordinate Mg(2+). Residue D60 is modified to 4-aspartylphosphate.

Interacts with FliM. Mg(2+) serves as cofactor.

The protein localises to the cytoplasm. Functionally, acts as a response regulator to control chemotaxis. Involved in the transmission of sensory signals from the chemoreceptors to the flagellar motors. Switches the flagellar rotation by binding to the flagellar motor switch protein FliM. In its active (phosphorylated or acetylated) form, exhibits enhanced binding to a switch component, FliM, at the flagellar motor which induces a change from counterclockwise to clockwise flagellar rotation. This Vibrio cholerae serotype O1 (strain ATCC 39315 / El Tor Inaba N16961) protein is Chemotaxis protein CheY-3.